The following is a 189-amino-acid chain: UPF0200 protein Smar_1234 (189 aa).

ATP is bound at residue 10-17 (GMPGAGKS).

This sequence belongs to the UPF0200 family.

The polypeptide is UPF0200 protein Smar_1234 (Staphylothermus marinus (strain ATCC 43588 / DSM 3639 / JCM 9404 / F1)).